We begin with the raw amino-acid sequence, 277 residues long: Carbonyl reductase [NADPH] 1 (277 aa).

NADP(+)-binding positions include valine 10–valine 34, aspartate 63–isoleucine 64, and asparagine 90. Position 30 is a phosphoserine (serine 30). Residues phenylalanine 95–valine 97 and glutamine 106 contribute to the glutathione site. Residue serine 140 coordinates substrate. Alanine 193–tyrosine 194 contributes to the glutathione binding site. Tyrosine 194 (proton acceptor) is an active-site residue. NADP(+)-binding positions include tyrosine 194 to lysine 198 and valine 231 to threonine 233.

It belongs to the short-chain dehydrogenases/reductases (SDR) family. As to quaternary structure, monomer.

Its subcellular location is the cytoplasm. It catalyses the reaction a secondary alcohol + NADP(+) = a ketone + NADPH + H(+). The enzyme catalyses prostaglandin F2alpha + NADP(+) = prostaglandin E2 + NADPH + H(+). The catalysed reaction is prostaglandin E1 + NADP(+) = 15-oxoprostaglandin E1 + NADPH + H(+). It carries out the reaction prostaglandin D2 + NADP(+) = 15-oxoprostaglandin D2 + NADPH + H(+). It catalyses the reaction menadione + NADPH + H(+) = menadiol + NADP(+). The enzyme catalyses prostaglandin E2 + NADP(+) = 15-oxoprostaglandin E2 + NADPH + H(+). The catalysed reaction is prostaglandin F2alpha + NADP(+) = 15-oxoprostaglandin F2alpha + NADPH + H(+). It carries out the reaction daunorubicin + NADPH + H(+) = 13-dihydrodaunorubicin + NADP(+). It catalyses the reaction S-nitrosoglutathione + NADPH + H(+) = S-(hydroxysulfenamide)glutathione + NADP(+). The enzyme catalyses a primary alcohol + NADP(+) = an aldehyde + NADPH + H(+). The catalysed reaction is cortisol + NADPH + H(+) = 20beta-dihydrocortisol + NADP(+). It carries out the reaction corticosterone + NADPH + H(+) = 20beta-dihydrocorticosterone + NADP(+). In terms of biological role, NADPH-dependent reductase with broad substrate specificity. Catalyzes the reduction of a wide variety of carbonyl compounds including quinones, prostaglandins, menadione, plus various xenobiotics. Catalyzes the reduction of the antitumor anthracyclines doxorubicin and daunorubicin to the cardiotoxic compounds doxorubicinol and daunorubicinol. Can convert prostaglandin E to prostaglandin F2-alpha. Can bind glutathione, which explains its higher affinity for glutathione-conjugated substrates. Catalyzes the reduction of S-nitrosoglutathione. In addition, participates in the glucocorticoid metabolism by catalyzing the NADPH-dependent cortisol/corticosterone into 20beta-dihydrocortisol (20b-DHF) or 20beta-corticosterone (20b-DHB), which are weak agonists of NR3C1 and NR3C2 in adipose tissue. This chain is Carbonyl reductase [NADPH] 1, found in Macaca fascicularis (Crab-eating macaque).